The chain runs to 235 residues: 6-carboxyhexanoate--CoA ligase (235 aa).

It belongs to the BioW family. As to quaternary structure, homodimer. It depends on Mg(2+) as a cofactor.

The catalysed reaction is heptanedioate + ATP + CoA = 6-carboxyhexanoyl-CoA + AMP + diphosphate. Its pathway is metabolic intermediate metabolism; pimeloyl-CoA biosynthesis; pimeloyl-CoA from pimelate: step 1/1. Its function is as follows. Catalyzes the transformation of pimelate into pimeloyl-CoA with concomitant hydrolysis of ATP to AMP. The sequence is that of 6-carboxyhexanoate--CoA ligase from Desulfovibrio desulfuricans (strain ATCC 27774 / DSM 6949 / MB).